The primary structure comprises 213 residues: Germin-like protein 8-14 (213 aa).

The N-terminal stretch at 1 to 23 is a signal peptide; sequence MAKAVMMLPVLLSFLLLPFSSMA. Cys-29 and Cys-44 are joined by a disulfide. Positions 56-203 constitute a Cupin type-1 domain; the sequence is HGLAAAGNTS…VTFLDDAQVK (148 aa). The N-linked (GlcNAc...) asparagine glycan is linked to Asn-63. Residues His-104, His-106, Glu-111, and His-151 each coordinate Mn(2+).

It belongs to the germin family. In terms of assembly, oligomer (believed to be a pentamer but probably hexamer). Post-translationally, phosphorylated on threonine residue.

Its subcellular location is the secreted. It localises to the extracellular space. It is found in the apoplast. Its function is as follows. May play a role in plant defense. Probably has no oxalate oxidase activity even if the active site is conserved. The sequence is that of Germin-like protein 8-14 (GER5) from Oryza sativa subsp. japonica (Rice).